A 286-amino-acid chain; its full sequence is ATP synthase gamma chain (286 aa).

The protein belongs to the ATPase gamma chain family. F-type ATPases have 2 components, CF(1) - the catalytic core - and CF(0) - the membrane proton channel. CF(1) has five subunits: alpha(3), beta(3), gamma(1), delta(1), epsilon(1). CF(0) has three main subunits: a, b and c.

It is found in the cell inner membrane. Its function is as follows. Produces ATP from ADP in the presence of a proton gradient across the membrane. The gamma chain is believed to be important in regulating ATPase activity and the flow of protons through the CF(0) complex. This Shewanella sp. (strain ANA-3) protein is ATP synthase gamma chain.